A 128-amino-acid polypeptide reads, in one-letter code: Large ribosomal subunit protein bL12 (128 aa).

It belongs to the bacterial ribosomal protein bL12 family. As to quaternary structure, homodimer. Part of the ribosomal stalk of the 50S ribosomal subunit. Forms a multimeric L10(L12)X complex, where L10 forms an elongated spine to which 2 to 4 L12 dimers bind in a sequential fashion. Binds GTP-bound translation factors.

Functionally, forms part of the ribosomal stalk which helps the ribosome interact with GTP-bound translation factors. Is thus essential for accurate translation. This chain is Large ribosomal subunit protein bL12, found in Methylobacillus flagellatus (strain ATCC 51484 / DSM 6875 / VKM B-1610 / KT).